Consider the following 90-residue polypeptide: Large ribosomal subunit protein bL31B-1 (90 aa).

Belongs to the bacterial ribosomal protein bL31 family. Type B subfamily. Part of the 50S ribosomal subunit.

The sequence is that of Large ribosomal subunit protein bL31B-1 from Streptomyces coelicolor (strain ATCC BAA-471 / A3(2) / M145).